We begin with the raw amino-acid sequence, 636 residues long: DNA mismatch repair protein MutL (636 aa).

Positions 362–393 are disordered; it reads RKTPEVHEEAEKPEFLVKQEAKNSEEPKNETE. A compositionally biased stretch (basic and acidic residues) spans 363 to 393; it reads KTPEVHEEAEKPEFLVKQEAKNSEEPKNETE.

It belongs to the DNA mismatch repair MutL/HexB family.

In terms of biological role, this protein is involved in the repair of mismatches in DNA. It is required for dam-dependent methyl-directed DNA mismatch repair. May act as a 'molecular matchmaker', a protein that promotes the formation of a stable complex between two or more DNA-binding proteins in an ATP-dependent manner without itself being part of a final effector complex. The chain is DNA mismatch repair protein MutL from Lactobacillus helveticus (strain DPC 4571).